The sequence spans 241 residues: Triosephosphate isomerase (241 aa).

9-11 serves as a coordination point for substrate; the sequence is NWK. Catalysis depends on histidine 96, which acts as the Electrophile. The Proton acceptor role is filled by glutamate 165. Residues glycine 171, serine 204, and 225–226 contribute to the substrate site; that span reads GG.

It belongs to the triosephosphate isomerase family. As to quaternary structure, homodimer.

It localises to the cytoplasm. It carries out the reaction D-glyceraldehyde 3-phosphate = dihydroxyacetone phosphate. It participates in carbohydrate biosynthesis; gluconeogenesis. The protein operates within carbohydrate degradation; glycolysis; D-glyceraldehyde 3-phosphate from glycerone phosphate: step 1/1. Involved in the gluconeogenesis. Catalyzes stereospecifically the conversion of dihydroxyacetone phosphate (DHAP) to D-glyceraldehyde-3-phosphate (G3P). The chain is Triosephosphate isomerase from Picosynechococcus sp. (strain ATCC 27264 / PCC 7002 / PR-6) (Agmenellum quadruplicatum).